Here is a 195-residue protein sequence, read N- to C-terminus: Segregation and condensation protein B (195 aa).

This sequence belongs to the ScpB family. As to quaternary structure, homodimer. Homodimerization may be required to stabilize the binding of ScpA to the Smc head domains. Component of a cohesin-like complex composed of ScpA, ScpB and the Smc homodimer, in which ScpA and ScpB bind to the head domain of Smc. The presence of the three proteins is required for the association of the complex with DNA.

The protein resides in the cytoplasm. Its function is as follows. Participates in chromosomal partition during cell division. May act via the formation of a condensin-like complex containing Smc and ScpA that pull DNA away from mid-cell into both cell halves. This is Segregation and condensation protein B from Clostridium perfringens (strain ATCC 13124 / DSM 756 / JCM 1290 / NCIMB 6125 / NCTC 8237 / Type A).